The following is a 534-amino-acid chain: NAD(P)H-quinone oxidoreductase chain 4 (534 aa).

14 consecutive transmembrane segments (helical) span residues 12–32 (FPWL…IPFF), 44–64 (FALS…INGF), 96–116 (MPLI…AWPV), 120–140 (PKLF…VFAV), 144–164 (LLFF…LAIW), 176–196 (FIIY…AMGF), 220–240 (ILCY…VPLH), 251–271 (TAPV…YALL), 285–305 (FAPL…LTSF), 314–334 (IAYS…SFSS), 340–360 (AMLQ…LVGA), 384–404 (FALW…SGFV), 425–445 (VVMA…LLSM), and 472–492 (VYII…PRLV).

It belongs to the complex I subunit 4 family.

The protein localises to the cellular thylakoid membrane. It carries out the reaction a plastoquinone + NADH + (n+1) H(+)(in) = a plastoquinol + NAD(+) + n H(+)(out). The enzyme catalyses a plastoquinone + NADPH + (n+1) H(+)(in) = a plastoquinol + NADP(+) + n H(+)(out). NDH-1 shuttles electrons from NAD(P)H, via FMN and iron-sulfur (Fe-S) centers, to quinones in the respiratory chain. The immediate electron acceptor for the enzyme in this species is believed to be plastoquinone. Couples the redox reaction to proton translocation (for every two electrons transferred, four hydrogen ions are translocated across the cytoplasmic membrane), and thus conserves the redox energy in a proton gradient. This chain is NAD(P)H-quinone oxidoreductase chain 4, found in Prochlorococcus marinus (strain AS9601).